The following is a 183-amino-acid chain: Peptide deformylase (183 aa).

Residues cysteine 111 and histidine 154 each coordinate Fe cation. The active site involves glutamate 155. Residue histidine 158 participates in Fe cation binding.

Belongs to the polypeptide deformylase family. Fe(2+) is required as a cofactor.

The catalysed reaction is N-terminal N-formyl-L-methionyl-[peptide] + H2O = N-terminal L-methionyl-[peptide] + formate. Its function is as follows. Removes the formyl group from the N-terminal Met of newly synthesized proteins. Requires at least a dipeptide for an efficient rate of reaction. N-terminal L-methionine is a prerequisite for activity but the enzyme has broad specificity at other positions. This is Peptide deformylase from Staphylococcus epidermidis (strain ATCC 35984 / DSM 28319 / BCRC 17069 / CCUG 31568 / BM 3577 / RP62A).